The following is a 344-amino-acid chain: MMVIRPVERSDVSALMQLASKTGGGLTSLPANEATLSARIERAIKTWQGELPKSEQGYVFVLEDSETGTVAGICAIEVAVGLNDPWYNYRVGTLVHASKELNVYNALPTLFLSNDHTGSSELCTLFLDPDWRKEGNGYLLSKSRFMFMAAFRDKFNDKVVAEMRGVIDEHGYSPFWQSLGKRFFSMDFSRADFLCGTGQKAFIAELMPKHPIYTHFLSQEAQDVIGQVHPQTAPARAVLEKEGFRYRNYIDIFDGGPTLECDIDRVRAIRKSRLVEVAEGQPAQGDFPACLVANENYHHFRVVLARTDPATERLILTAEQLDALKCHAGDRVRLVRLCAEEKTA.

Leu125 contacts succinyl-CoA. His229 serves as the catalytic Proton donor.

It belongs to the arginine N-succinyltransferase family.

The catalysed reaction is succinyl-CoA + L-arginine = N(2)-succinyl-L-arginine + CoA + H(+). Its pathway is amino-acid degradation; L-arginine degradation via AST pathway; L-glutamate and succinate from L-arginine: step 1/5. In terms of biological role, catalyzes the transfer of succinyl-CoA to arginine to produce N(2)-succinylarginine. The protein is Arginine N-succinyltransferase of Escherichia coli (strain 55989 / EAEC).